Reading from the N-terminus, the 352-residue chain is Glycerol-3-phosphate dehydrogenase [NAD(P)+] (352 aa).

NADPH-binding residues include serine 11, tryptophan 12, arginine 32, and lysine 105. Residues lysine 105, glycine 133, and serine 135 each contribute to the sn-glycerol 3-phosphate site. Alanine 137 provides a ligand contact to NADPH. Sn-glycerol 3-phosphate-binding residues include lysine 188, aspartate 241, serine 251, arginine 252, and asparagine 253. The active-site Proton acceptor is lysine 188. Arginine 252 provides a ligand contact to NADPH. Residues valine 276 and glutamate 278 each coordinate NADPH.

This sequence belongs to the NAD-dependent glycerol-3-phosphate dehydrogenase family.

It is found in the cytoplasm. It carries out the reaction sn-glycerol 3-phosphate + NAD(+) = dihydroxyacetone phosphate + NADH + H(+). It catalyses the reaction sn-glycerol 3-phosphate + NADP(+) = dihydroxyacetone phosphate + NADPH + H(+). It participates in membrane lipid metabolism; glycerophospholipid metabolism. Its function is as follows. Catalyzes the reduction of the glycolytic intermediate dihydroxyacetone phosphate (DHAP) to sn-glycerol 3-phosphate (G3P), the key precursor for phospholipid synthesis. This chain is Glycerol-3-phosphate dehydrogenase [NAD(P)+], found in Desulfitobacterium hafniense (strain Y51).